The sequence spans 363 residues: MNTWFLNVVDPLHQWFLGFGDIGVVLWTVLKILMIAIPLIVSVAFYVVWERKLIGWMHVRHGPMYVGMGLFQAFADVFKLLFKEVLYPSKAHKAIFVIAPLLTLAPSFAAWAVVPFDTKLVLSNANVGLLYLLAMTSLGVYGIILAGWASNSKYAFLGAMRSAAQVVSYEIAMGFALVGVMIAAGSLNLSQIVMAQAGSSGFFDWFLIPLFPLFIVYWVSGVAETNRSPFDVVEGESEIVAGHMVEYSGSVFALFFLAEYANMILVSFLISIFFLGGWLSPIQGWVSGQVSPLIDWVWNGGWPWLLLKVLFFASAYIWFRASFPRYRYDQIMRLGWKVFIPLTIVWIAVTALMVFSGVIQKGV.

The next 10 helical transmembrane spans lie at 29–49 (VLKI…YVVW), 62–82 (GPMY…KLLF), 94–114 (AIFV…WAVV), 127–147 (VGLL…ILAG), 166–186 (VVSY…AAGS), 202–222 (FFDW…VSGV), 239–257 (IVAG…LFFL), 264–286 (ILVS…QGWV), 293–313 (LIDW…LFFA), and 339–359 (FIPL…SGVI).

It belongs to the complex I subunit 1 family. NDH-1 is composed of 14 different subunits. Subunits NuoA, H, J, K, L, M, N constitute the membrane sector of the complex.

The protein resides in the cell inner membrane. The enzyme catalyses a quinone + NADH + 5 H(+)(in) = a quinol + NAD(+) + 4 H(+)(out). NDH-1 shuttles electrons from NADH, via FMN and iron-sulfur (Fe-S) centers, to quinones in the respiratory chain. The immediate electron acceptor for the enzyme in this species is believed to be ubiquinone. Couples the redox reaction to proton translocation (for every two electrons transferred, four hydrogen ions are translocated across the cytoplasmic membrane), and thus conserves the redox energy in a proton gradient. This subunit may bind ubiquinone. The sequence is that of NADH-quinone oxidoreductase subunit H from Xylella fastidiosa (strain Temecula1 / ATCC 700964).